The primary structure comprises 757 residues: Polyribonucleotide nucleotidyltransferase (757 aa).

Mg(2+) is bound by residues aspartate 482 and aspartate 488. The KH domain maps to proline 549–methionine 608. The S1 motif domain maps to glycine 618–arginine 686. Residues glycine 698–tyrosine 757 are disordered. Residues asparagine 702–asparagine 714 are compositionally biased toward basic and acidic residues. Basic residues predominate over residues glycine 725–arginine 734.

Belongs to the polyribonucleotide nucleotidyltransferase family. It depends on Mg(2+) as a cofactor.

It localises to the cytoplasm. The catalysed reaction is RNA(n+1) + phosphate = RNA(n) + a ribonucleoside 5'-diphosphate. Involved in mRNA degradation. Catalyzes the phosphorolysis of single-stranded polyribonucleotides processively in the 3'- to 5'-direction. The polypeptide is Polyribonucleotide nucleotidyltransferase (Wolbachia pipientis wMel).